Consider the following 438-residue polypeptide: GTPase Obg (438 aa).

The 159-residue stretch at 1 to 159 (MAFRDVLNIE…RRVRLELRLI (159 aa)) folds into the Obg domain. The OBG-type G domain occupies 160 to 332 (ADVGLVGYPN…LRETLFQLLP (173 aa)). Residues 166 to 173 (GYPNAGKS), 191 to 195 (FTTLS), 219 to 222 (DIPG), 285 to 288 (NKVE), and 313 to 315 (SAK) each bind ATP. Residues Ser-173 and Thr-193 each contribute to the Mg(2+) site. The OCT domain maps to 357–435 (IVFREDAPAK…IGTFRFEYFD (79 aa)).

The protein belongs to the TRAFAC class OBG-HflX-like GTPase superfamily. OBG GTPase family. As to quaternary structure, monomer. Mg(2+) is required as a cofactor.

The protein resides in the cytoplasm. An essential GTPase which binds GTP, GDP and possibly (p)ppGpp with moderate affinity, with high nucleotide exchange rates and a fairly low GTP hydrolysis rate. Plays a role in control of the cell cycle, stress response, ribosome biogenesis and in those bacteria that undergo differentiation, in morphogenesis control. In Deinococcus radiodurans (strain ATCC 13939 / DSM 20539 / JCM 16871 / CCUG 27074 / LMG 4051 / NBRC 15346 / NCIMB 9279 / VKM B-1422 / R1), this protein is GTPase Obg.